Here is a 670-residue protein sequence, read N- to C-terminus: Mannosyl-oligosaccharide alpha-1,2-mannosidase IA (670 aa).

The Cytoplasmic segment spans residues 1–30 (MTGILPTYQRFVNGVPVPSISRRSFRLREK). Residues 31–51 (YLIVSVLLTFGIVWLGALFYL) form a helical; Signal-anchor for type II membrane protein membrane-spanning segment. Residues 52 to 670 (PEFKSSNSVN…EPAHAQNNRI (619 aa)) are Lumenal-facing. The N-linked (GlcNAc...) asparagine glycan is linked to Asn-61. A disordered region spans residues 135 to 177 (DVAPSVSSSRGPSKPPVDAIEEPAVGNNAANKDVSPSGPKAES). Cys-480 and Cys-512 form a disulfide bridge. Residue Glu-526 is the Proton donor of the active site. Position 637 (Thr-637) interacts with Ca(2+).

The protein belongs to the glycosyl hydrolase 47 family. Ca(2+) serves as cofactor. Post-translationally, N-glycosylated. Contains high mannose-type oligosaccharides.

It is found in the golgi apparatus membrane. The catalysed reaction is N(4)-(alpha-D-Man-(1-&gt;2)-alpha-D-Man-(1-&gt;2)-alpha-D-Man-(1-&gt;3)-[alpha-D-Man-(1-&gt;2)-alpha-D-Man-(1-&gt;3)-[alpha-D-Man-(1-&gt;2)-alpha-D-Man-(1-&gt;6)]-alpha-D-Man-(1-&gt;6)]-beta-D-Man-(1-&gt;4)-beta-D-GlcNAc-(1-&gt;4)-beta-D-GlcNAc)-L-asparaginyl-[protein] (N-glucan mannose isomer 9A1,2,3B1,2,3) + 4 H2O = N(4)-(alpha-D-Man-(1-&gt;3)-[alpha-D-Man-(1-&gt;3)-[alpha-D-Man-(1-&gt;6)]-alpha-D-Man-(1-&gt;6)]-beta-D-Man-(1-&gt;4)-beta-D-GlcNAc-(1-&gt;4)-beta-D-GlcNAc)-L-asparaginyl-[protein] (N-glucan mannose isomer 5A1,2) + 4 beta-D-mannose. It catalyses the reaction N(4)-(alpha-D-Man-(1-&gt;2)-alpha-D-Man-(1-&gt;2)-alpha-D-Man-(1-&gt;3)-[alpha-D-Man-(1-&gt;3)-[alpha-D-Man-(1-&gt;2)-alpha-D-Man-(1-&gt;6)]-alpha-D-Man-(1-&gt;6)]-beta-D-Man-(1-&gt;4)-beta-D-GlcNAc-(1-&gt;4)-beta-D-GlcNAc)-L-asparaginyl-[protein] (N-glucan mannose isomer 8A1,2,3B1,3) + 3 H2O = N(4)-(alpha-D-Man-(1-&gt;3)-[alpha-D-Man-(1-&gt;3)-[alpha-D-Man-(1-&gt;6)]-alpha-D-Man-(1-&gt;6)]-beta-D-Man-(1-&gt;4)-beta-D-GlcNAc-(1-&gt;4)-beta-D-GlcNAc)-L-asparaginyl-[protein] (N-glucan mannose isomer 5A1,2) + 3 beta-D-mannose. Its pathway is protein modification; protein glycosylation. Its activity is regulated as follows. Strongly inhibited by 1-deoxymannojirimycin, an inhibitor of class I alpha-mannosidases, and by EDTA. EDTA inhibition is reversed by the addition of calcium, but not of magnesium. Involved in the maturation of Asn-linked oligosaccharides. Converts Man(9)GlcNAc(2) to Man(5)GlcNAc(2) primarily through the Man(7)GlcNAc(2) isomer C processing intermediate. The chain is Mannosyl-oligosaccharide alpha-1,2-mannosidase IA from Spodoptera frugiperda (Fall armyworm).